Reading from the N-terminus, the 506-residue chain is Maturase K (506 aa).

Belongs to the intron maturase 2 family. MatK subfamily.

Its subcellular location is the plastid. The protein resides in the chloroplast. Functionally, usually encoded in the trnK tRNA gene intron. Probably assists in splicing its own and other chloroplast group II introns. This Olea europaea (Common olive) protein is Maturase K.